Reading from the N-terminus, the 357-residue chain is Protein Wnt-8c (357 aa).

The N-terminal stretch at 1 to 16 (MRGSTFLLLSIVGIYG) is a signal peptide. A disulfide bond links Cys55 and Cys66. An N-linked (GlcNAc...) asparagine glycan is attached at Asn104. 9 disulfide bridges follow: Cys105-Cys113, Cys115-Cys133, Cys181-Cys195, Cys183-Cys190, Cys260-Cys298, Cys276-Cys291, Cys313-Cys328, Cys315-Cys325, and Cys320-Cys321. Ser187 carries the O-palmitoleoyl serine lipid modification. Residues Asn263 and Asn282 are each glycosylated (N-linked (GlcNAc...) asparagine). N-linked (GlcNAc...) asparagine glycosylation occurs at Asn346.

Belongs to the Wnt family. Palmitoleoylation is required for efficient binding to frizzled receptors. Depalmitoleoylation leads to Wnt signaling pathway inhibition. In terms of processing, proteolytic processing by tiki1 and tiki2 promotes oxidation and formation of large disulfide-bond oligomers, leading to inactivation of wnt8c. In terms of tissue distribution, cells that form rhombomere 4. Hensen node and the neural plate immediately anterior to it.

The protein localises to the secreted. Its subcellular location is the extracellular space. It localises to the extracellular matrix. In terms of biological role, ligand for members of the frizzled family of seven transmembrane receptors. Probable developmental protein. Is likely to signal over only few cell diameters. May be involved in the regulation of axis formation and in the rhombomere specification. The polypeptide is Protein Wnt-8c (WNT8C) (Gallus gallus (Chicken)).